We begin with the raw amino-acid sequence, 67 residues long: Large ribosomal subunit protein bL32 (67 aa).

The span at 1–19 (MAVPKRKQSRANTHARRSQ) shows a compositional bias: basic residues. Residues 1–20 (MAVPKRKQSRANTHARRSQW) are disordered.

Belongs to the bacterial ribosomal protein bL32 family.

The sequence is that of Large ribosomal subunit protein bL32 from Leifsonia xyli subsp. xyli (strain CTCB07).